The chain runs to 975 residues: Glycine dehydrogenase (decarboxylating) (975 aa).

N6-(pyridoxal phosphate)lysine is present on Lys-723.

Belongs to the GcvP family. As to quaternary structure, the glycine cleavage system is composed of four proteins: P, T, L and H. Requires pyridoxal 5'-phosphate as cofactor.

The catalysed reaction is N(6)-[(R)-lipoyl]-L-lysyl-[glycine-cleavage complex H protein] + glycine + H(+) = N(6)-[(R)-S(8)-aminomethyldihydrolipoyl]-L-lysyl-[glycine-cleavage complex H protein] + CO2. Functionally, the glycine cleavage system catalyzes the degradation of glycine. The P protein binds the alpha-amino group of glycine through its pyridoxal phosphate cofactor; CO(2) is released and the remaining methylamine moiety is then transferred to the lipoamide cofactor of the H protein. This is Glycine dehydrogenase (decarboxylating) from Burkholderia cenocepacia (strain HI2424).